The chain runs to 414 residues: Serine/threonine transporter SstT (414 aa).

The Cytoplasmic portion of the chain corresponds to 2 to 15; sequence TTQRSPGLFRRLAH. A helical transmembrane segment spans residues 16 to 36; sequence GSLVKQILVGLVLGILLAWIS. The Periplasmic portion of the chain corresponds to 37 to 45; the sequence is KPAAEAVGL. A helical transmembrane segment spans residues 46–66; that stretch reads LGTLFVGALKAVAPILVLMLV. Topologically, residues 67–83 are cytoplasmic; that stretch reads MASIANHQHGQKTNILP. Residues 84–104 traverse the membrane as a helical segment; it reads ILFLYLLGTFSAALAAVVFSF. The Periplasmic portion of the chain corresponds to 105–142; sequence AFPSTLHLSSSAGDISPPSGIVEVMRGLVMSMVSNPID. A helical membrane pass occupies residues 143-163; it reads ALLKGNYIGILVWAIGLGFAL. At 164-179 the chain is on the cytoplasmic side; the sequence is RHGNETTKNLVNDMSN. A helical transmembrane segment spans residues 180 to 200; it reads AVTFMVKLVIRFAPIGIFGLV. At 201-217 the chain is on the periplasmic side; it reads SSTLATTGFSTLWGYAQ. A helical transmembrane segment spans residues 218 to 238; sequence LLVVLVGCMLLVALVVNPLLV. Residues 239–299 are Cytoplasmic-facing; that stretch reads WWKIRRNPFP…VSIPLGATIN (61 aa). A helical membrane pass occupies residues 300–320; sequence MAGAAITITVLTLAAVNTLGI. Residues 321–331 lie on the Periplasmic side of the membrane; that stretch reads PVDLPTALLLS. The chain crosses the membrane as a helical span at residues 332 to 352; that stretch reads VVASLCACGASGVAGGSLLLI. Residues 353 to 414 lie on the Cytoplasmic side of the membrane; sequence PLACNMFGIS…DRLANSALRN (62 aa).

This sequence belongs to the dicarboxylate/amino acid:cation symporter (DAACS) (TC 2.A.23) family.

Its subcellular location is the cell inner membrane. The enzyme catalyses L-serine(in) + Na(+)(in) = L-serine(out) + Na(+)(out). The catalysed reaction is L-threonine(in) + Na(+)(in) = L-threonine(out) + Na(+)(out). Involved in the import of serine and threonine into the cell, with the concomitant import of sodium (symport system). This chain is Serine/threonine transporter SstT, found in Shigella dysenteriae serotype 1 (strain Sd197).